The chain runs to 396 residues: Putative nickel insertion protein (396 aa).

Belongs to the LarC family.

This Methanosarcina acetivorans (strain ATCC 35395 / DSM 2834 / JCM 12185 / C2A) protein is Putative nickel insertion protein.